Here is a 137-residue protein sequence, read N- to C-terminus: Large ribosomal subunit protein uL16 (137 aa).

Belongs to the universal ribosomal protein uL16 family. Part of the 50S ribosomal subunit.

Its function is as follows. Binds 23S rRNA and is also seen to make contacts with the A and possibly P site tRNAs. The polypeptide is Large ribosomal subunit protein uL16 (Chelativorans sp. (strain BNC1)).